The sequence spans 189 residues: Protein CURLY FLAG LEAF 1 (189 aa).

An EAR motif is present at residues 50 to 55; the sequence is TLELNS. Residues 57–91 form the WW domain; sequence LSLPCHWEQCLDLKTGEIYYINWKNGMRVKEDPRK. The interval 90–148 is disordered; the sequence is RKVMNADPDSGDSYGTVCSEEDSSYYDSEESSSESSPSSRENHKEEEEEEEEEEEEEED. 2 stretches are compositionally biased toward acidic residues: residues 108–121 and 135–148; these read SEED…EESS and EEEE…EEED.

Interacts with BHLH122/CFLAP1 and BHLH80/CFLAP2. Binds to HDG1. Mostly observed in roots, flowers and siliques. Expressed in cells differentiated from epidermal cells such as trichomes, stigmatic papillar cells and guard cells, as well as in tissues undergoing abscission and dehiscence.

Its function is as follows. Negatively regulates the cuticle development by interacting with the HD-ZIP IV transcription factor HDG1. The polypeptide is Protein CURLY FLAG LEAF 1 (Arabidopsis thaliana (Mouse-ear cress)).